The primary structure comprises 156 residues: Protein-export protein SecB (156 aa).

This sequence belongs to the SecB family. As to quaternary structure, homotetramer, a dimer of dimers. One homotetramer interacts with 1 SecA dimer.

It localises to the cytoplasm. Functionally, one of the proteins required for the normal export of preproteins out of the cell cytoplasm. It is a molecular chaperone that binds to a subset of precursor proteins, maintaining them in a translocation-competent state. It also specifically binds to its receptor SecA. The sequence is that of Protein-export protein SecB from Pectobacterium carotovorum subsp. carotovorum (strain PC1).